The sequence spans 452 residues: Keratin, type II cytoskeletal 80 (452 aa).

The tract at residues 1-82 is head; the sequence is MAYRSCVVGF…DPAVQQQKNQ (82 aa). A Phosphoserine modification is found at Ser45. A coil 1A region spans residues 82–118; the sequence is QEKEEMKALNDKFASLIGKVQALEQRNQLLETRWSFL. The IF rod domain occupies 83 to 394; it reads EKEEMKALND…KLMEGEESRM (312 aa). The interval 119–135 is linker 1; the sequence is QGQGSATFDLSHHYETF. The coil 1B stretch occupies residues 136–227; sequence QGRLQEELRK…TVYEQELKDL (92 aa). A linker 12 region spans residues 228-251; it reads TAQVKDVSVTVGLDSRCHIDLSGI. Residues 252 to 390 are coil 2; that stretch reads VEEVKAQYDA…ATYHKLMEGE (139 aa). Residues 391 to 452 are tail; it reads ESRMDLPSAT…YLSQESEASE (62 aa). Residues 412–452 form a disordered region; that stretch reads TASKSGLTKTSSRKKKNRRGPVIKITEMSEKYLSQESEASE. Over residues 422-432 the composition is skewed to basic residues; sequence SSRKKKNRRGP. Residues 443-452 show a composition bias toward polar residues; sequence YLSQESEASE.

The protein belongs to the intermediate filament family. Heterotetramer of two type I and two type II keratins.

The chain is Keratin, type II cytoskeletal 80 (Krt80) from Mus musculus (Mouse).